Here is a 282-residue protein sequence, read N- to C-terminus: 4-hydroxybenzoate octaprenyltransferase (282 aa).

The next 9 membrane-spanning stretches (helical) occupy residues 17–37 (IGIL…NQGF), 40–60 (IDLL…GCVI), 90–110 (AFIL…KLPI), 113–133 (FYFA…KRFL), 135–155 (APQL…FIAS), 163–183 (FVVL…MYAM), 207–227 (LIIA…AINK), 231–251 (WFFY…LKLI), and 262–282 (AFLV…LALI).

Belongs to the UbiA prenyltransferase family. Mg(2+) is required as a cofactor.

The protein localises to the cell inner membrane. It catalyses the reaction all-trans-octaprenyl diphosphate + 4-hydroxybenzoate = 4-hydroxy-3-(all-trans-octaprenyl)benzoate + diphosphate. It participates in cofactor biosynthesis; ubiquinone biosynthesis. Functionally, catalyzes the prenylation of para-hydroxybenzoate (PHB) with an all-trans polyprenyl group. Mediates the second step in the final reaction sequence of ubiquinone-8 (UQ-8) biosynthesis, which is the condensation of the polyisoprenoid side chain with PHB, generating the first membrane-bound Q intermediate 3-octaprenyl-4-hydroxybenzoate. The protein is 4-hydroxybenzoate octaprenyltransferase of Legionella pneumophila (strain Paris).